A 118-amino-acid polypeptide reads, in one-letter code: MDVFLMIRRHKTTIFTDAKESSTVFELKRIVEGILKRPPEEQRLYKDDQLLDDGKTLGECGFTSQTARPQAPATVGLAFRADDTFEALRIEPFSSPPELPDVMKPQDSGGSANEQAVQ.

N-acetylmethionine is present on M1. The region spanning 1–79 (MDVFLMIRRH…QAPATVGLAF (79 aa)) is the Ubiquitin-like domain. T84 carries the phosphothreonine modification. A disordered region spans residues 91-118 (EPFSSPPELPDVMKPQDSGGSANEQAVQ). 2 positions are modified to phosphoserine: S108 and S111. The segment covering 108 to 118 (SGGSANEQAVQ) has biased composition (polar residues).

Belongs to the Elongin B family. Heterotrimer of an A (ELOA, ELOA2 or ELOA3P), ELOB and ELOC subunit. The elongin BC complex interacts with EPOP; leading to recruit the elongin BC complex to Polycomb group (PcG) target genes, thereby restricting excessive activity of the PRC2/EED-EZH2 complex. Component of multiple cullin-RING E3 ubiquitin-protein ligase complexes composed of Elongin BC (ELOB and ELOC), a cullin (either CUL2 or CUL5), a catalytic subunit (either RBX1 or RNF7/RBX2), as well as a substrate adapter protein that can be either ASB2, ASB9, ASB11, KLHDC2, KLHDC3, KLHDC10, APPBP2, FEM1A, FEM1B, FEM1C, LRR1, PCMTD1, SOCS1, SOCS2, SOCS5, SPSB1, SPSB3, ELOA, VHL, WSB1 or RAB40C. As part of the Elongin BC E3 ubiquitin ligase complex; interacts with NRBP1. May also interact with DCUN1D1, DCUN1D2, DCUN1D3 and DCUN1D5. May form oligomers as a KLHDC2/KLHDC3-ELOB-ELOC complex; this interaction is autoinhibitory for the E3 ligase complex as the substrate-binding site of KLHDC2/KLHDC3 is blocked in the oligomer.

The protein localises to the nucleus. The protein operates within protein modification; protein ubiquitination. Its function is as follows. SIII, also known as elongin, is a general transcription elongation factor that increases the RNA polymerase II transcription elongation past template-encoded arresting sites. Subunit A is transcriptionally active and its transcription activity is strongly enhanced by binding to the dimeric complex of the SIII regulatory subunits B and C (elongin BC complex). In embryonic stem cells, the elongin BC complex is recruited by EPOP to Polycomb group (PcG) target genes in order generate genomic region that display both active and repressive chromatin properties, an important feature of pluripotent stem cells. In terms of biological role, core component of multiple cullin-2 and cullin-5-RING E3 ubiquitin-protein ligase complexes (ECS complexes), which mediate the ubiquitination of target proteins. By binding to BC-box motifs it seems to link target recruitment subunits, like VHL and members of the SOCS box family, to Cullin/RBX1 modules that activate E2 ubiquitination enzymes. Component the von Hippel-Lindau ubiquitination complex CBC(VHL). A number of ECS complexes (containing either KLHDC2, KLHDC3, KLHDC10, APPBP2, FEM1A, FEM1B or FEM1C as substrate-recognition component) are part of the DesCEND (destruction via C-end degrons) pathway, which recognizes a C-degron located at the extreme C terminus of target proteins, leading to their ubiquitination and degradation. The ECS(ASB9) complex mediates ubiquitination and degradation of CKB. As part of a multisubunit ubiquitin ligase complex, polyubiquitinates monoubiquitinated POLR2A. ECS(LRR1) ubiquitinates MCM7 and promotes CMG replisome disassembly by VCP and chromatin extraction during S-phase. As part of the ECS(RAB40C) complex, mediates ANKRD28 ubiquitination and degradation, thereby inhibiting protein phosphatase 6 (PP6) complex activity and focal adhesion assembly during cell migration. This chain is Elongin-B, found in Mus musculus (Mouse).